A 346-amino-acid polypeptide reads, in one-letter code: Upstream stimulatory factor 2 (346 aa).

Disordered stretches follow at residues 1 to 44 (MDML…PGAE) and 215 to 244 (APRTHPYSPKIDGTRTPRDERRRAQHNEVE). Residues 11 to 20 (ASSATAAAAA) show a composition bias toward low complexity. Over residues 226 to 244 (DGTRTPRDERRRAQHNEVE) the composition is skewed to basic and acidic residues. In terms of domain architecture, bHLH spans 235 to 290 (RRRAQHNEVERRRRDKINNWIVQLSKIIPDCHADNSKTGASKGGILSKACDYIREL). Residues 307–328 (LQMDNELLRQQIEELKNENALL) are leucine-zipper.

In terms of assembly, efficient DNA binding requires dimerization with another bHLH protein. Binds DNA as a homodimer or a heterodimer (USF1/USF2). Interacts with MAF.

The protein resides in the nucleus. Transcription factor that binds to a symmetrical DNA sequence (E-boxes) (5'-CACGTG-3') that is found in a variety of viral and cellular promoters. The protein is Upstream stimulatory factor 2 (Usf2) of Mus musculus (Mouse).